A 772-amino-acid chain; its full sequence is TBC domain-containing protein C4G8.04 (772 aa).

A compositionally biased stretch (polar residues) spans Ser143–Thr161. 2 disordered regions span residues Ser143–Glu163 and Lys275–Ser294. Low complexity predominate over residues Lys275–Thr291. Position 395 is a phosphothreonine (Thr395). The Rab-GAP TBC domain maps to Gly504–Gly693.

The polypeptide is TBC domain-containing protein C4G8.04 (Schizosaccharomyces pombe (strain 972 / ATCC 24843) (Fission yeast)).